The primary structure comprises 335 residues: Holliday junction branch migration complex subunit RuvB (335 aa).

Positions 1–183 are large ATPase domain (RuvB-L); the sequence is MDERIISSET…FGVIDHLEFY (183 aa). Residues Leu-22, Arg-23, Gly-64, Lys-67, Thr-68, Thr-69, 130–132, Arg-173, Tyr-183, and Arg-220 contribute to the ATP site; that span reads EDY. Thr-68 lines the Mg(2+) pocket. Residues 184-254 form a small ATPAse domain (RuvB-S) region; it reads TEEQLTEIVL…LAKEALTLLQ (71 aa). Residues 257–335 form a head domain (RuvB-H) region; the sequence is PRGLDTIDQK…HLGISYEKEV (79 aa). The DNA site is built by Arg-293, Arg-312, and Arg-317.

Belongs to the RuvB family. As to quaternary structure, homohexamer. Forms an RuvA(8)-RuvB(12)-Holliday junction (HJ) complex. HJ DNA is sandwiched between 2 RuvA tetramers; dsDNA enters through RuvA and exits via RuvB. An RuvB hexamer assembles on each DNA strand where it exits the tetramer. Each RuvB hexamer is contacted by two RuvA subunits (via domain III) on 2 adjacent RuvB subunits; this complex drives branch migration. In the full resolvosome a probable DNA-RuvA(4)-RuvB(12)-RuvC(2) complex forms which resolves the HJ.

It is found in the cytoplasm. The catalysed reaction is ATP + H2O = ADP + phosphate + H(+). Its function is as follows. The RuvA-RuvB-RuvC complex processes Holliday junction (HJ) DNA during genetic recombination and DNA repair, while the RuvA-RuvB complex plays an important role in the rescue of blocked DNA replication forks via replication fork reversal (RFR). RuvA specifically binds to HJ cruciform DNA, conferring on it an open structure. The RuvB hexamer acts as an ATP-dependent pump, pulling dsDNA into and through the RuvAB complex. RuvB forms 2 homohexamers on either side of HJ DNA bound by 1 or 2 RuvA tetramers; 4 subunits per hexamer contact DNA at a time. Coordinated motions by a converter formed by DNA-disengaged RuvB subunits stimulates ATP hydrolysis and nucleotide exchange. Immobilization of the converter enables RuvB to convert the ATP-contained energy into a lever motion, pulling 2 nucleotides of DNA out of the RuvA tetramer per ATP hydrolyzed, thus driving DNA branch migration. The RuvB motors rotate together with the DNA substrate, which together with the progressing nucleotide cycle form the mechanistic basis for DNA recombination by continuous HJ branch migration. Branch migration allows RuvC to scan DNA until it finds its consensus sequence, where it cleaves and resolves cruciform DNA. The sequence is that of Holliday junction branch migration complex subunit RuvB from Listeria monocytogenes serotype 4a (strain HCC23).